The primary structure comprises 246 residues: Phosphomannomutase 2 (246 aa).

N-acetylalanine is present on Ala2. Asp12 serves as the catalytic Nucleophile. The Mg(2+) site is built by Asp12 and Asp14. Asp14 (proton donor/acceptor) is an active-site residue. Residues Arg21, Arg123, Arg134, and Arg141 each coordinate alpha-D-mannose 1-phosphate. Lys149 is modified (N6-acetyllysine). Ser179 and Asp181 together coordinate alpha-D-mannose 1-phosphate. Mg(2+) is bound by residues Asp209, Phe221, Asp223, and Thr226.

Belongs to the eukaryotic PMM family. In terms of assembly, homodimer.

The protein localises to the cytoplasm. It carries out the reaction alpha-D-mannose 1-phosphate = D-mannose 6-phosphate. It functions in the pathway nucleotide-sugar biosynthesis; GDP-alpha-D-mannose biosynthesis; alpha-D-mannose 1-phosphate from D-fructose 6-phosphate: step 2/2. In terms of biological role, involved in the synthesis of the GDP-mannose and dolichol-phosphate-mannose required for a number of critical mannosyl transfer reactions. The protein is Phosphomannomutase 2 (PMM2) of Homo sapiens (Human).